A 354-amino-acid polypeptide reads, in one-letter code: Guanine nucleotide-binding protein alpha-16 subunit (354 aa).

Residue Gly2 is the site of N-myristoyl glycine attachment. Cys3 is lipidated: S-palmitoyl cysteine. The G-alpha domain occupies 31–354 (KTVKLLLLGA…RDNLRTCGLY (324 aa)). Residues 34–47 (KLLLLGAGESGKST) form a G1 motif region. Residues 39-46 (GAGESGKS), 174-180 (LRTRIKT), 199-203 (DVGGQ), 268-271 (NKKD), and Ala326 contribute to the GTP site. Mg(2+) is bound by residues Ser46 and Thr180. The G2 motif stretch occupies residues 172-180 (DVLRTRIKT). A G3 motif region spans residues 195-204 (FVVFDVGGQR). The segment at 264–271 (ILFLNKKD) is G4 motif. Residues 324–329 (TCATDT) form a G5 motif region.

Belongs to the G-alpha family. As to quaternary structure, g proteins are composed of 3 units; alpha, beta and gamma. The alpha chain contains the guanine nucleotide binding site.

In terms of biological role, guanine nucleotide-binding proteins (G proteins) are involved as modulators or transducers in various transmembrane signaling systems. In the 1-cell embryo, probably together with goa-1, controls nuclear rotation and spindle elongation during mitosis. During the first embryonic cell divisons, plays a role in gpr-1/2 cortical localization and in the proper orientation of EMS blastomere mitotic spindle. The polypeptide is Guanine nucleotide-binding protein alpha-16 subunit (gpa-16) (Caenorhabditis briggsae).